A 77-amino-acid chain; its full sequence is NAD(P)H-quinone oxidoreductase subunit L (77 aa).

2 consecutive transmembrane segments (helical) span residues 12–32 and 47–67; these read LIAY…LLFY and LGIY…SPFL.

It belongs to the complex I NdhL subunit family. NDH-1 can be composed of about 15 different subunits; different subcomplexes with different compositions have been identified which probably have different functions.

It is found in the cellular thylakoid membrane. It catalyses the reaction a plastoquinone + NADH + (n+1) H(+)(in) = a plastoquinol + NAD(+) + n H(+)(out). The catalysed reaction is a plastoquinone + NADPH + (n+1) H(+)(in) = a plastoquinol + NADP(+) + n H(+)(out). Its function is as follows. NDH-1 shuttles electrons from an unknown electron donor, via FMN and iron-sulfur (Fe-S) centers, to quinones in the respiratory and/or the photosynthetic chain. The immediate electron acceptor for the enzyme in this species is believed to be plastoquinone. Couples the redox reaction to proton translocation, and thus conserves the redox energy in a proton gradient. Cyanobacterial NDH-1 also plays a role in inorganic carbon-concentration. In Prochlorococcus marinus (strain AS9601), this protein is NAD(P)H-quinone oxidoreductase subunit L.